Here is a 156-residue protein sequence, read N- to C-terminus: MSINATLLGQAISFLLFVWFCMKFVWPPLMNAIEERQKKIADGLADAGRAAKDLELAQVKATEQLKDAKATANEIIEQANKRKAQIVDEAKVEADTERAKIIAQGHAEIENERNRVKEDLRKQVAILAIAGAEKILERSIDEAAHSDIVNKLVAEL.

The helical transmembrane segment at 7–29 (LLGQAISFLLFVWFCMKFVWPPL) threads the bilayer.

Belongs to the ATPase B chain family. In terms of assembly, F-type ATPases have 2 components, F(1) - the catalytic core - and F(0) - the membrane proton channel. F(1) has five subunits: alpha(3), beta(3), gamma(1), delta(1), epsilon(1). F(0) has three main subunits: a(1), b(2) and c(10-14). The alpha and beta chains form an alternating ring which encloses part of the gamma chain. F(1) is attached to F(0) by a central stalk formed by the gamma and epsilon chains, while a peripheral stalk is formed by the delta and b chains.

The protein resides in the cell inner membrane. F(1)F(0) ATP synthase produces ATP from ADP in the presence of a proton or sodium gradient. F-type ATPases consist of two structural domains, F(1) containing the extramembraneous catalytic core and F(0) containing the membrane proton channel, linked together by a central stalk and a peripheral stalk. During catalysis, ATP synthesis in the catalytic domain of F(1) is coupled via a rotary mechanism of the central stalk subunits to proton translocation. Functionally, component of the F(0) channel, it forms part of the peripheral stalk, linking F(1) to F(0). The polypeptide is ATP synthase subunit b (Shewanella pealeana (strain ATCC 700345 / ANG-SQ1)).